Reading from the N-terminus, the 228-residue chain is FAS1 domain-containing protein NCU02579 (228 aa).

A signal peptide spans 1 to 18 (MRFTPYLVLAPTAAVAFA). The segment at 50–74 (PAVGLGPAMPPSGAPQADGPANAGG) is disordered. Residues 77–225 (SVMLSDVMGR…GEVWILKGVR (149 aa)) form the FAS1 domain.

The protein localises to the vacuole. The polypeptide is FAS1 domain-containing protein NCU02579 (Neurospora crassa (strain ATCC 24698 / 74-OR23-1A / CBS 708.71 / DSM 1257 / FGSC 987)).